The primary structure comprises 428 residues: Cytochrome c biogenesis protein CcsB (428 aa).

Helical transmembrane passes span 14-34 (LRFA…GTFI), 72-92 (SFWF…CSFR), and 162-182 (IGPL…AYGS).

This sequence belongs to the Ccs1/CcsB family. In terms of assembly, may interact with CcsA.

The protein resides in the cellular thylakoid membrane. Functionally, required during biogenesis of c-type cytochromes (cytochrome c6 and cytochrome f) at the step of heme attachment. This Prochlorococcus marinus (strain AS9601) protein is Cytochrome c biogenesis protein CcsB.